The following is a 365-amino-acid chain: Class I histocompatibility antigen, Gogo-A*0501 alpha chain (365 aa).

The N-terminal stretch at 1 to 24 is a signal peptide; the sequence is MAVVAPRTLLLLLSGALALTQTWA. The tract at residues 25-114 is alpha-1; the sequence is GSHSMRYFST…ALRYYNQSED (90 aa). Residues 25-308 lie on the Extracellular side of the membrane; that stretch reads GSHSMRYFST…EPSSQPTIPI (284 aa). Asn110 is a glycosylation site (N-linked (GlcNAc...) asparagine). Residues 115–206 are alpha-2; it reads GSHTIQRMYG…ENGKETLQRT (92 aa). 2 disulfides stabilise this stretch: Cys125–Cys188 and Cys227–Cys283. The segment at 207-298 is alpha-3; the sequence is DAPKTHTTHQ…GLPKPLTLRW (92 aa). An Ig-like C1-type domain is found at 209 to 295; it reads PKTHTTHQAV…QHEGLPKPLT (87 aa). The connecting peptide stretch occupies residues 299–308; the sequence is EPSSQPTIPI. The chain crosses the membrane as a helical span at residues 309-332; it reads VGIIAGLVLFGAVIAGAVVAAVRW. Over 333 to 365 the chain is Cytoplasmic; the sequence is RRKSSDRKGGSYSQAASSDSAQGSDVSLTACKV. A disordered region spans residues 338-365; that stretch reads DRKGGSYSQAASSDSAQGSDVSLTACKV. Low complexity predominate over residues 342 to 359; it reads GSYSQAASSDSAQGSDVS. Phosphoserine is present on Ser343. Phosphotyrosine is present on Tyr344. Phosphoserine is present on residues Ser345, Ser349, Ser352, Ser356, and Ser359.

It belongs to the MHC class I family. In terms of assembly, heterodimer of an alpha chain and a beta chain (beta-2-microglobulin).

The protein localises to the membrane. In terms of biological role, involved in the presentation of foreign antigens to the immune system. This chain is Class I histocompatibility antigen, Gogo-A*0501 alpha chain, found in Gorilla gorilla gorilla (Western lowland gorilla).